A 719-amino-acid chain; its full sequence is MFNKVTKTFQYGQHSVVLETGEMARQASGAVLVSVEDTVVLATVVAAKKAKAGQDFFPLTVDYIEKTYAAGRIPGGFFKREGKPSEKETLTSRLIDRPLRPLFPEGFYNDVQVVIHTLSVNPDIDPDIPAMIGASAALAISGIPFNGPIGAARVGYVDGQYVLNPTATQLKSSKMDLVVAGTENAVLMVESEAKQLSEEIMLGGVVFGHEQMQAAINAIHDLVRDAGKPDWDWQPAPKNEALIAAVSAAAQEGLNAAYQIREKQARTTKLREVYAAVQAAMAEQAAQAGQPAPDSVGVDNILFDLEARIVRSQILNGEPRIDGRDTRTVRPISIRLGVLPRAHGSALFTRGETQALVVATLGTKQDEQIIDALMGEYRDRFMLHYNMPPFATGETGRIGVPKRREIGHGRLAKRALLPLLPAPEDFQYTIRLVSEITESNGSSSMASVCGGSLAMMDAGVPTNDHVAGVAMGLILDSGKFAVLTDILGDEDHLGDMDFKVAGTETGITALQMDIKIQGITKEIMQVALAQAREGRLHILGKMRDALEGSRTELSAFAPRMLTIKINPEKIRDVIGKGGATIRALTEETGTQIDISDDGTIVIASVDETQAKEAQRRIVELTADVEVGQIYDGSVLRLLDFGAIVQVLPGRDGLLHISEIANYRIANINDVLKVGQPVRVKVIEADDKGRLRLSIKAIGGIEQQQSGTAEPAAQSEPQAE.

Positions 491 and 497 each coordinate Mg(2+). One can recognise a KH domain in the interval 558-617 (PRMLTIKINPEKIRDVIGKGGATIRALTEETGTQIDISDDGTIVIASVDETQAKEAQRRI). The 69-residue stretch at 627–695 (GQIYDGSVLR…DKGRLRLSIK (69 aa)) folds into the S1 motif domain.

The protein belongs to the polyribonucleotide nucleotidyltransferase family. Mg(2+) serves as cofactor.

The protein resides in the cytoplasm. The enzyme catalyses RNA(n+1) + phosphate = RNA(n) + a ribonucleoside 5'-diphosphate. Functionally, involved in mRNA degradation. Catalyzes the phosphorolysis of single-stranded polyribonucleotides processively in the 3'- to 5'-direction. This is Polyribonucleotide nucleotidyltransferase from Bordetella parapertussis (strain 12822 / ATCC BAA-587 / NCTC 13253).